The sequence spans 269 residues: GRF-interacting factor 10 (269 aa).

The interval 1–71 is disordered; it reads MTAEGEAKNP…GEKDDGACRD (71 aa). Positions 22 to 43 are enriched in low complexity; the sequence is QQAAPAPAPAQGEVAQEAAVQG. Residues 47-69 are compositionally biased toward basic and acidic residues; that stretch reads EQERDKADREVQGGAGEKDDGAC. The 36-residue stretch at 113–148 folds into the QLQ domain; it reads AFTAMQLQELEQQSRVYQYMAARVPVPTHLVFPVWK. In terms of domain architecture, WRC spans 179-223; the sequence is EPEPGRCRRTDGKKWRCWRNTIPNEKYCERHMHRGRKRPVQVFLE. 2 short sequence motifs (bipartite nuclear localization signal) span residues 184 to 194 and 212 to 216; these read RCRRTDGKKWR and RGRKR. Residues 217 to 269 are disordered; the sequence is PVQVFLEDDEPDSASGSKPAAPGKATEGAKKADDKSPSSKKLAVAAPAAVQST. The segment covering 243-253 has biased composition (basic and acidic residues); the sequence is EGAKKADDKSP.

This sequence belongs to the GRF family. Interacts with GIF1. In terms of tissue distribution, highly expressed in shoots. Expressed in developing leaves.

Its subcellular location is the nucleus. In terms of biological role, involved in the regulation of cell proliferation in developing shoots and leaves. Does not possess transactivation activity. The protein is GRF-interacting factor 10 of Zea mays (Maize).